Here is a 257-residue protein sequence, read N- to C-terminus: Zinc uptake system ATP-binding protein ZurA (257 aa).

The 237-residue stretch at 5–241 (IEVNNVSYHY…ADRELEILAE (237 aa)) folds into the ABC transporter domain. ATP is bound at residue 37–44 (GPNGSGKS).

This sequence belongs to the ABC transporter superfamily.

In terms of biological role, involved in a zinc uptake transport system. The sequence is that of Zinc uptake system ATP-binding protein ZurA (zurA) from Listeria innocua serovar 6a (strain ATCC BAA-680 / CLIP 11262).